A 190-amino-acid polypeptide reads, in one-letter code: Lipid A acyltransferase PagP (190 aa).

Residues 1-29 (MYVAMIIRKYFLIIALLVMPWLAIPSVSA) form the signal peptide. Catalysis depends on residues His-62, Asp-105, and Ser-106.

This sequence belongs to the lipid A palmitoyltransferase family. Homodimer.

The protein localises to the cell outer membrane. The enzyme catalyses a lipid A + a 1,2-diacyl-sn-glycero-3-phosphocholine = a hepta-acyl lipid A + a 2-acyl-sn-glycero-3-phosphocholine. It carries out the reaction a lipid IVA + a 1,2-diacyl-sn-glycero-3-phosphocholine = a lipid IVB + a 2-acyl-sn-glycero-3-phosphocholine. The catalysed reaction is a lipid IIA + a 1,2-diacyl-sn-glycero-3-phosphocholine = a lipid IIB + a 2-acyl-sn-glycero-3-phosphocholine. Its function is as follows. Transfers a fatty acid residue from the sn-1 position of a phospholipid to the N-linked hydroxyfatty acid chain on the proximal unit of lipid A or its precursors. The sequence is that of Lipid A acyltransferase PagP from Salmonella typhi.